Reading from the N-terminus, the 90-residue chain is Acylphosphatase (90 aa).

Residues 3-90 (AVTLKATGRV…QNYHDFRITN (88 aa)) form the Acylphosphatase-like domain. Active-site residues include Arg-18 and Asn-36.

This sequence belongs to the acylphosphatase family.

It catalyses the reaction an acyl phosphate + H2O = a carboxylate + phosphate + H(+). This chain is Acylphosphatase (acyP), found in Lactiplantibacillus plantarum (strain ATCC BAA-793 / NCIMB 8826 / WCFS1) (Lactobacillus plantarum).